Consider the following 1010-residue polypeptide: Sodium/potassium-transporting ATPase subunit alpha-3 (1010 aa).

A disordered region spans residues 1–21 (MGDKGEKESPKKGKGKRDLDD). At 1–74 (MGDKGEKESP…NALTPPPTTP (74 aa)) the chain is on the cytoplasmic side. Residues 69–71 (PPP) are interaction with phosphoinositide-3 kinase. A helical membrane pass occupies residues 75–95 (EWVKFCRQLFGGFSILLWIGA). Over 96 to 118 (ILCFLAYGIQAGTEDEPSNDNLY) the chain is Extracellular. A helical membrane pass occupies residues 119–139 (LGIVLAAVVIITGCFSYYQEA). The Cytoplasmic portion of the chain corresponds to 140 to 275 (KSSKIMESFK…VGKTPIAVEI (136 aa)). A helical membrane pass occupies residues 276 to 295 (EHFIQLITGVAVFLGISFFV). The Extracellular segment spans residues 296–307 (LSLILGYTWLEA). Residues 308 to 325 (VIFLIGIIVANVPEGLLA) form a helical membrane-spanning segment. The Cytoplasmic segment spans residues 326–759 (TVTVCLTLTA…EEGRLIFDNL (434 aa)). D363 functions as the 4-aspartylphosphate intermediate in the catalytic mechanism. Residues D704 and D708 each coordinate Mg(2+). The chain crosses the membrane as a helical span at residues 760 to 779 (KKSIAYTLTSNIPEITPFLL). At 780 to 789 (FIMANIPLPL) the chain is on the extracellular side. A helical transmembrane segment spans residues 790–810 (GTITILCIDLGTDMVPAISLA). Topologically, residues 811-830 (YEAAESDIMKRQPRNPRSDK) are cytoplasmic. The helical transmembrane segment at 831–853 (LVNERLISMAYGQIGMIQALGGF) threads the bilayer. Over 854 to 905 (FSYFVILAENGFLPSCLVGIRLSWDDRTINDLEDSYGQQWTYEQRKVVEFTC) the chain is Extracellular. The chain crosses the membrane as a helical span at residues 906 to 925 (HTAFFVSIVVVQWADLIICK). Residues 926–938 (TRRNSVFQQGMKN) are Cytoplasmic-facing. Phosphoserine; by PKA is present on S930. The helical transmembrane segment at 939–957 (KILIFGLFEETALAAFLSY) threads the bilayer. Residues 958 to 972 (CPGMDVALRMYPLKP) lie on the Extracellular side of the membrane. Residues 973–993 (SWWFCAFPYSFLIFVYDEIRK) traverse the membrane as a helical segment. Residues 994-1010 (LILRRNPGGWVEKETYY) lie on the Cytoplasmic side of the membrane.

Belongs to the cation transport ATPase (P-type) (TC 3.A.3) family. Type IIC subfamily. In terms of assembly, the sodium/potassium-transporting ATPase is composed of a catalytic alpha subunit, an auxiliary non-catalytic beta subunit and an additional regulatory subunit.

The protein localises to the cell membrane. The catalysed reaction is K(+)(out) + Na(+)(in) + ATP + H2O = K(+)(in) + Na(+)(out) + ADP + phosphate + H(+). Functionally, this is the catalytic component of the active enzyme, which catalyzes the hydrolysis of ATP coupled with the exchange of sodium and potassium ions across the plasma membrane. This action creates the electrochemical gradient of sodium and potassium ions, providing the energy for active transport of various nutrients. The protein is Sodium/potassium-transporting ATPase subunit alpha-3 (ATP1A3) of Gallus gallus (Chicken).